The sequence spans 200 residues: GTP cyclohydrolase 1 (200 aa).

The Zn(2+) site is built by cysteine 87, histidine 90, and cysteine 158.

Belongs to the GTP cyclohydrolase I family. Toroid-shaped homodecamer, composed of two pentamers of five dimers.

The catalysed reaction is GTP + H2O = 7,8-dihydroneopterin 3'-triphosphate + formate + H(+). The protein operates within cofactor biosynthesis; 7,8-dihydroneopterin triphosphate biosynthesis; 7,8-dihydroneopterin triphosphate from GTP: step 1/1. The sequence is that of GTP cyclohydrolase 1 from Xanthomonas axonopodis pv. citri (strain 306).